The following is a 587-amino-acid chain: Protein FRIGIDA-ESSENTIAL 1 (587 aa).

The segment at 96 to 123 (KRAALPCKFFAKGWCFNGVSCKFLHVKE) adopts a C3H1-type zinc-finger fold. Disordered stretches follow at residues 264–346 (DMGS…SFTI), 368–421 (GDRP…HQET), and 467–492 (IKPA…SDEI). Low complexity predominate over residues 294 to 304 (NGNSLSGSGSL). Over residues 470–479 (AGHDSWHRSD) the composition is skewed to basic and acidic residues.

Component of the transcription activator complex FRI-C composed of FRI, FRL1, SUF4, FLX and FES1. Interacts with FLX, (via C-terminus) with FRI (via C-terminus), and with RIN1, a component of the SWR1 chromatin-remodeling complex. In terms of tissue distribution, expressed in root and shoot apices and vasculature.

The protein resides in the nucleus. Its function is as follows. Transcriptional activator involved in the FRIGIDA-mediated vernalization pathway, but not in the autonomous flowering pathway. Acts cooperatively with FRI (FRIGIDA) or FRL1 (FRIGIDA-LIKE 1) to promote FLC (FLOWERING LOCUS C) expression. Required for the stabilization of the FRI-C complex. The sequence is that of Protein FRIGIDA-ESSENTIAL 1 (FES1) from Arabidopsis thaliana (Mouse-ear cress).